The sequence spans 445 residues: MSDVELVLRSTRVITPEGTRPAAVAVAAGKITAVLPHDAEVPAGARLEDLGDDVLLPGLVDTHVHVNDPGRTHWEGFWTATRAAAAGGITTLVDMPLNSLPPTTTVGNLRTKRDVAADKAHIDVGFWGGALPDNVKDLRPLHDAGVFGFKAFLSPSGVDEFPELDQERLARSMAEIAGFGGLLIVHAEDPHHLAAAPQRGGPRYTDFLASRPRDAEDTAIANLLAQAKRLNARVHVLHLSSSDALPLIAGAKAEGVRVTVETCPHYLTLTAEEVPDGASEFKCCPPIREAANQDLLWQALADGTIDCVVTDHSPSTADLKTDDFATAWGGISGLQLSLPAIWTEARRRGHSLEDVVRWMSARTARLVGLAQKGAIEAGRDADFAVLAPDETFTVDPAALQHRNRVTAYAGKTLSGVVKSTWLRGERIMADGEFTEPKGRLLSREP.

Positions 63, 65, 150, 186, 238, and 311 each coordinate Zn(2+). At Lys-150 the chain carries N6-carboxylysine.

The protein belongs to the metallo-dependent hydrolases superfamily. Allantoinase family. In terms of assembly, homotetramer. Requires Zn(2+) as cofactor. In terms of processing, carboxylation allows a single lysine to coordinate two zinc ions.

It catalyses the reaction (S)-allantoin + H2O = allantoate + H(+). The protein operates within nitrogen metabolism; (S)-allantoin degradation; allantoate from (S)-allantoin: step 1/1. Its function is as follows. Catalyzes the conversion of allantoin (5-ureidohydantoin) to allantoic acid by hydrolytic cleavage of the five-member hydantoin ring. The chain is Allantoinase from Streptomyces avermitilis (strain ATCC 31267 / DSM 46492 / JCM 5070 / NBRC 14893 / NCIMB 12804 / NRRL 8165 / MA-4680).